The chain runs to 309 residues: Malate dehydrogenase (309 aa).

NAD(+)-binding positions include 6–11 and Asp31; that span reads GSGRVG. Residues Arg80 and Arg86 each coordinate substrate. Residues Asn93 and 116–118 contribute to the NAD(+) site; that span reads TTN. Substrate is bound by residues Asn118 and Arg149. Catalysis depends on His173, which acts as the Proton acceptor.

It belongs to the LDH/MDH superfamily. Homotetramer.

It catalyses the reaction (S)-malate + NAD(+) = oxaloacetate + NADH + H(+). In terms of biological role, catalyzes the reversible oxidation of malate to oxaloacetate. Exhibits higher specific activity for oxaloacetate reduction than for malate oxidation in vitro. Has a strong preference for NAD. Can use NADPH for oxaloacetate reduction, but activity decreases more than 90%. No activity detected with NADP(+) and malate. The protein is Malate dehydrogenase of Pyrobaculum islandicum (strain DSM 4184 / JCM 9189 / GEO3).